Reading from the N-terminus, the 275-residue chain is Undecaprenyl-diphosphatase (275 aa).

Transmembrane regions (helical) follow at residues Trp8 to Ile28, Ala45 to Ile65, Phe92 to Phe112, Phe119 to Ile139, Phe197 to Ile217, Glu225 to Leu245, and Gly255 to Leu275.

Belongs to the UppP family.

It localises to the cell membrane. The enzyme catalyses di-trans,octa-cis-undecaprenyl diphosphate + H2O = di-trans,octa-cis-undecaprenyl phosphate + phosphate + H(+). Its function is as follows. Catalyzes the dephosphorylation of undecaprenyl diphosphate (UPP). Confers resistance to bacitracin. This chain is Undecaprenyl-diphosphatase, found in Oceanobacillus iheyensis (strain DSM 14371 / CIP 107618 / JCM 11309 / KCTC 3954 / HTE831).